We begin with the raw amino-acid sequence, 265 residues long: Chanoclavine-I dehydrogenase easD (265 aa).

A signal peptide spans 1 to 20 (MSFVSSKIFAITGGASGIGA). Residues I18, D66, R132, Y169, K173, and T205 each coordinate NADP(+). Y169 serves as the catalytic Proton donor. Residue K173 is the Lowers pKa of active site Tyr of the active site.

This sequence belongs to the short-chain dehydrogenases/reductases (SDR) family. As to quaternary structure, homotetramer.

It carries out the reaction chanoclavine-I + NAD(+) = chanoclavine-I aldehyde + NADH + H(+). The protein operates within alkaloid biosynthesis; ergot alkaloid biosynthesis. Chanoclavine-I dehydrogenase; part of the gene cluster that mediates the biosynthesis of fungal ergot alkaloid. DmaW catalyzes the first step of ergot alkaloid biosynthesis by condensing dimethylallyl diphosphate (DMAP) and tryptophan to form 4-dimethylallyl-L-tryptophan. The second step is catalyzed by the methyltransferase easF that methylates 4-dimethylallyl-L-tryptophan in the presence of S-adenosyl-L-methionine, resulting in the formation of 4-dimethylallyl-L-abrine. The catalase easC and the FAD-dependent oxidoreductase easE then transform 4-dimethylallyl-L-abrine to chanoclavine-I which is further oxidized by easD in the presence of NAD(+), resulting in the formation of chanoclavine-I aldehyde. Chanoclavine-I aldehyde is the precursor of ergoamides and ergopeptines in Clavicipitaceae, and clavine-type alcaloids such as fumiclavine in Trichocomaceae. However, the metabolites downstream of chanoclavine-I aldehyde in Arthrodermataceae have not been identified yet. This is Chanoclavine-I dehydrogenase easD from Trichophyton verrucosum (strain HKI 0517).